The following is a 2053-amino-acid chain: Nonribosomal peptide synthetase pboA (2053 aa).

The tract at residues alanine 16–arginine 402 is adenylation 1. Residues arginine 503–arginine 579 form the Carrier 1 domain. At serine 540 the chain carries O-(pantetheine 4'-phosphoryl)serine. Residues asparagine 611–glutamine 896 are condensation 1. Positions serine 1034 to arginine 1418 are adenylation 2. Residues valine 1515 to isoleucine 1593 enclose the Carrier 2 domain. An O-(pantetheine 4'-phosphoryl)serine modification is found at serine 1553. Residues asparagine 1630–aspartate 1981 are condensation 2.

Belongs to the NRP synthetase family. The cofactor is pantetheine 4'-phosphate.

It functions in the pathway secondary metabolite biosynthesis. In terms of biological role, nonribosomal peptide synthetase; part of the gene cluster that mediates the biosynthesis of protubonine B, a hydroxylated and diacetylated cyclo-L-Trp-L-Leu derivative. The first step of the protubonine B synthesis is performed by the nonribosomal peptide synthetase pboA that catalyzes the formation of cyclo-L-Trp-L-Leu by condensing L-Leu with L-Trp. The flavin-dependent monooxygenase pboD is responsible for hydroxylation at C-3 of the indole ring and subsequent formation of the pyrrolidine ring, leadind to protubonine D. Protubonine D is further diacetylated by two acetyltransferases, pboB and pboC, to form the final product protubonine B via protubonine C. The sequence is that of Nonribosomal peptide synthetase pboA from Aspergillus ustus.